The following is a 524-amino-acid chain: Tyrosine-protein kinase HCK (524 aa).

The disordered stretch occupies residues 1–72 (MGGRSSCEDP…NNSNSMPPGF (72 aa)). G2 carries the N-myristoyl glycine lipid modification. Residue G3 is the site of S-palmitoyl cysteine attachment. Residues 29 to 38 (FLRDGSKASK) show a composition bias toward basic and acidic residues. Y50 is subject to Phosphotyrosine; by autocatalysis. Residues 54-68 (PTSSSKLGPNNSNSM) show a composition bias toward polar residues. The 61-residue stretch at 76 to 136 (SEDTIVVALY…PSNYVARVNS (61 aa)) folds into the SH3 domain. The 98-residue stretch at 142-239 (WFFKGISRKD…GLCQKLSVPC (98 aa)) folds into the SH2 domain. T200 bears the Phosphothreonine mark. Y207 is subject to Phosphotyrosine. The region spanning 260-513 (LQMEKKLGAG…YIQSVLDDFY (254 aa)) is the Protein kinase domain. Residues 266-274 (LGAGQFGEV) and K288 each bind ATP. D379 acts as the Proton acceptor in catalysis. Y409 is modified (phosphotyrosine; by autocatalysis). At S460 the chain carries Phosphoserine. At Y520 the chain carries Phosphotyrosine.

This sequence belongs to the protein kinase superfamily. Tyr protein kinase family. SRC subfamily. Interacts with ADAM15. Interacts with FASLG. Interacts with ARRB1 and ARRB2. Interacts with FCGR1A; the interaction may be indirect. Interacts with IL6ST. Interacts (via SH3 domain) with ELMO1. Interacts (via SH3 domain) with TP73. Interacts with YAP1. Interacts with ABL1 and ITGB1, and thereby recruits ABL1 to activated ITGB1. Interacts (via SH2 domain) with FLT3 (tyrosine phosphorylated). Interacts with CBL. Interacts with VAV1, WAS and RAPGEF1. Interacts (via SH3 domain) with WDCP. Phosphorylated on several tyrosine residues. Autophosphorylated. Becomes rapidly phosphorylated upon activation of the immunoglobulin receptors FCGR1A and FCGR2A. Phosphorylation at Tyr-409 increases kinase activity. Phosphorylation at Tyr-520 inhibits kinase activity. Kinase activity is not required for phosphorylation at Tyr-520, suggesting that this site may be a target of other kinases. Post-translationally, ubiquitinated by CBL, leading to its degradation via the proteasome. In terms of processing, isoform 2 palmitoylation at position 2 requires prior myristoylation. Palmitoylation at position 3 is required for caveolar localization of isoform 2. Expressed predominantly in cells of the myeloid and B-lymphoid lineages.

The protein resides in the cytoplasmic vesicle. It is found in the secretory vesicle. Its subcellular location is the cytoplasm. It localises to the cytosol. The protein localises to the membrane. The protein resides in the caveola. It is found in the lysosome. Its subcellular location is the cell projection. It localises to the podosome membrane. The protein localises to the cell membrane. The protein resides in the cell junction. It is found in the focal adhesion. Its subcellular location is the cytoskeleton. It localises to the golgi apparatus. The protein localises to the nucleus. It catalyses the reaction L-tyrosyl-[protein] + ATP = O-phospho-L-tyrosyl-[protein] + ADP + H(+). Its activity is regulated as follows. Subject to autoinhibition, mediated by intramolecular interactions involving the SH2 and SH3 domains. Kinase activity is also regulated by phosphorylation at regulatory tyrosine residues. Phosphorylation at Tyr-409 is required for optimal activity. Phosphorylation at Tyr-520 inhibits kinase activity. Inhibited by PP1. Functionally, non-receptor tyrosine-protein kinase found in hematopoietic cells that transmits signals from cell surface receptors and plays an important role in the regulation of innate immune responses, including neutrophil, monocyte, macrophage and mast cell functions, phagocytosis, cell survival and proliferation, cell adhesion and migration. Acts downstream of receptors that bind the Fc region of immunoglobulins, such as FCGR1A and FCGR2A, but also CSF3R, PLAUR, the receptors for IFNG, IL2, IL6 and IL8, and integrins, such as ITGB1 and ITGB2. During the phagocytic process, mediates mobilization of secretory lysosomes, degranulation, and activation of NADPH oxidase to bring about the respiratory burst. Plays a role in the release of inflammatory molecules. Promotes reorganization of the actin cytoskeleton and actin polymerization, formation of podosomes and cell protrusions. Inhibits TP73-mediated transcription activation and TP73-mediated apoptosis. Phosphorylates CBL in response to activation of immunoglobulin gamma Fc region receptors. Phosphorylates ADAM15, BCR, ELMO1, FCGR2A, GAB1, GAB2, RAPGEF1, STAT5B, TP73, VAV1 and WAS. The polypeptide is Tyrosine-protein kinase HCK (Hck) (Mus musculus (Mouse)).